A 420-amino-acid chain; its full sequence is L-rhamnose isomerase (420 aa).

The Mn(2+) site is built by His-264, Asp-296, and Asp-298.

The protein belongs to the rhamnose isomerase family. It depends on Mn(2+) as a cofactor.

The protein resides in the cytoplasm. It catalyses the reaction L-rhamnopyranose = L-rhamnulose. It functions in the pathway carbohydrate degradation; L-rhamnose degradation; glycerone phosphate from L-rhamnose: step 1/3. In terms of biological role, catalyzes the interconversion of L-rhamnose and L-rhamnulose. The polypeptide is L-rhamnose isomerase (Listeria innocua serovar 6a (strain ATCC BAA-680 / CLIP 11262)).